A 176-amino-acid polypeptide reads, in one-letter code: Nucleoside triphosphate/diphosphate phosphatase (176 aa).

Catalysis depends on Arg23, which acts as the Proton donor. Asn87, Asp103, Asp105, Asp107, Asp120, and Glu123 together coordinate Mg(2+).

Belongs to the Ntdp family. Requires Mg(2+) as cofactor.

It carries out the reaction a ribonucleoside 5'-triphosphate + H2O = a ribonucleoside 5'-diphosphate + phosphate + H(+). The catalysed reaction is a ribonucleoside 5'-diphosphate + H2O = a ribonucleoside 5'-phosphate + phosphate + H(+). In terms of biological role, has nucleoside phosphatase activity towards nucleoside triphosphates and nucleoside diphosphates. The sequence is that of Nucleoside triphosphate/diphosphate phosphatase from Bacillus cereus (strain AH820).